The sequence spans 258 residues: Meiotic drive suppressor wtf20 (258 aa).

The segment at 1–71 (MKNNYTSLKS…GPTEIANPNV (71 aa)) is disordered. Over residues 19–30 (KTDHEIDLEKGL) the composition is skewed to basic and acidic residues. A run of 3 helical transmembrane segments spans residues 84 to 106 (IYFL…TAWV), 121 to 140 (FSVT…FYFY), and 196 to 216 (SASA…AETV).

It belongs to the WTF family. As to quaternary structure, homomer. Interacts with other proteins that exhibit high sequence similarity.

It localises to the spore membrane. The protein localises to the vacuole membrane. Its function is as follows. Acts as a suppressor component of the dual wtf meiotic drive system, and can suppress but not confer meiotic drive by compatible poisons. Wtf meiotic drive systems promote unequal transmission of alleles from the parental zygote to progeny spores by encoding a poison and an antidote from the same locus; the poison is trans-acting and forms toxic aggregates in all spores within an ascus, wherease the antidote is spore-specific and targets aggregates for degradation by the vacuole. Meiotic drive by wtf systems therefore lead to poisoning of all progeny that do not inherit the dual poison/antidote allele, or express a compatible antidote. The polypeptide is Meiotic drive suppressor wtf20 (Schizosaccharomyces pombe (strain 972 / ATCC 24843) (Fission yeast)).